The chain runs to 646 residues: uncharacterized protein (646 aa).

The next 8 membrane-spanning stretches (helical) occupy residues 20–42 (ILSRQSTLLIQWSIVVLAGLYLL), 55–77 (FLAGVILRIVLLAGVSVELIHQV), 97–115 (LLHFLLYGYVLLTAFHYML), 127–149 (YTFDLAVVSLPIVQMIFSFFSYW), 159–181 (IAFVFLFFIITLPIALNVVFFKL), 188–206 (ILLGLFYTLIIGLLVLLLA), 216–238 (YGAVMPYTIYLAMAGFLMSYHLF), and 251–273 (WVTMAVMVFFVLLLNPIYNIGTA).

Its subcellular location is the cell membrane. This is an uncharacterized protein from Bacillus subtilis (strain 168).